The following is a 292-amino-acid chain: Putative phosphatase MPN_381 (292 aa).

D11 acts as the Nucleophile in catalysis. D11 is a Mg(2+) binding site. L12 lines the phosphate pocket. Residue D13 coordinates Mg(2+). Phosphate is bound by residues 60-61 (TG) and K217. Residue D242 participates in Mg(2+) binding. Position 245 (N245) interacts with phosphate.

It belongs to the HAD-like hydrolase superfamily. Cof family. It depends on Mg(2+) as a cofactor.

The protein is Putative phosphatase MPN_381 of Mycoplasma pneumoniae (strain ATCC 29342 / M129 / Subtype 1) (Mycoplasmoides pneumoniae).